A 426-amino-acid chain; its full sequence is Gamma-glutamyl phosphate reductase (426 aa).

It belongs to the gamma-glutamyl phosphate reductase family.

The protein resides in the cytoplasm. It carries out the reaction L-glutamate 5-semialdehyde + phosphate + NADP(+) = L-glutamyl 5-phosphate + NADPH + H(+). The protein operates within amino-acid biosynthesis; L-proline biosynthesis; L-glutamate 5-semialdehyde from L-glutamate: step 2/2. Its function is as follows. Catalyzes the NADPH-dependent reduction of L-glutamate 5-phosphate into L-glutamate 5-semialdehyde and phosphate. The product spontaneously undergoes cyclization to form 1-pyrroline-5-carboxylate. The sequence is that of Gamma-glutamyl phosphate reductase from Ralstonia nicotianae (strain ATCC BAA-1114 / GMI1000) (Ralstonia solanacearum).